Reading from the N-terminus, the 308-residue chain is F420-non-reducing hydrogenase subunit G (308 aa).

This sequence belongs to the [NiFe]/[NiFeSe] hydrogenase small subunit family. As to quaternary structure, the F420-non-reducing hydrogenase is composed of three subunits; MvhA, MvhD and MvhG. It forms a complex with the heterodisulfide reductase (hdr).

Part of a complex that provides reducing equivalents for heterodisulfide reductase. This Methanothermobacter thermautotrophicus (strain ATCC 29096 / DSM 1053 / JCM 10044 / NBRC 100330 / Delta H) (Methanobacterium thermoautotrophicum) protein is F420-non-reducing hydrogenase subunit G (mvhG).